The sequence spans 169 residues: Photosystem I assembly protein Ycf3 (169 aa).

3 TPR repeats span residues 36–69, 73–106, and 121–154; these read AFTY…EIDP, SYIL…NPFL, and GEQA…TPGN.

Belongs to the Ycf3 family.

The protein resides in the plastid. It localises to the chloroplast thylakoid membrane. In terms of biological role, essential for the assembly of the photosystem I (PSI) complex. May act as a chaperone-like factor to guide the assembly of the PSI subunits. The chain is Photosystem I assembly protein Ycf3 from Cucumis sativus (Cucumber).